A 172-amino-acid polypeptide reads, in one-letter code: 3-hydroxydecanoyl-[acyl-carrier-protein] dehydratase (172 aa).

Residue His-71 is part of the active site.

The protein belongs to the thioester dehydratase family. FabA subfamily. As to quaternary structure, homodimer.

It localises to the cytoplasm. It catalyses the reaction a (3R)-hydroxyacyl-[ACP] = a (2E)-enoyl-[ACP] + H2O. It carries out the reaction (3R)-hydroxydecanoyl-[ACP] = (2E)-decenoyl-[ACP] + H2O. The enzyme catalyses (2E)-decenoyl-[ACP] = (3Z)-decenoyl-[ACP]. It participates in lipid metabolism; fatty acid biosynthesis. Necessary for the introduction of cis unsaturation into fatty acids. Catalyzes the dehydration of (3R)-3-hydroxydecanoyl-ACP to E-(2)-decenoyl-ACP and then its isomerization to Z-(3)-decenoyl-ACP. Can catalyze the dehydratase reaction for beta-hydroxyacyl-ACPs with saturated chain lengths up to 16:0, being most active on intermediate chain length. The chain is 3-hydroxydecanoyl-[acyl-carrier-protein] dehydratase from Escherichia coli (strain SE11).